The following is a 102-amino-acid chain: NADH-quinone oxidoreductase subunit K (102 aa).

3 helical membrane passes run 6-26 (LGQG…GVLV), 30-50 (LLFM…AFIV), and 64-84 (FILV…LILL).

It belongs to the complex I subunit 4L family. As to quaternary structure, NDH-1 is composed of 14 different subunits. Subunits NuoA, H, J, K, L, M, N constitute the membrane sector of the complex.

The protein localises to the cell inner membrane. The enzyme catalyses a quinone + NADH + 5 H(+)(in) = a quinol + NAD(+) + 4 H(+)(out). Its function is as follows. NDH-1 shuttles electrons from NADH, via FMN and iron-sulfur (Fe-S) centers, to quinones in the respiratory chain. The immediate electron acceptor for the enzyme in this species is believed to be ubiquinone. Couples the redox reaction to proton translocation (for every two electrons transferred, four hydrogen ions are translocated across the cytoplasmic membrane), and thus conserves the redox energy in a proton gradient. The polypeptide is NADH-quinone oxidoreductase subunit K (Acidiphilium cryptum (strain JF-5)).